Reading from the N-terminus, the 402-residue chain is mRNA-capping enzyme subunit alpha (402 aa).

The active-site N6-GMP-lysine intermediate is Lys67. Residues 374 to 402 (SVTKRKLDETSNDDAPAIKKVAKESEKEI) form a disordered region.

It belongs to the eukaryotic GTase family. As to quaternary structure, heterodimer. The mRNA-capping enzyme is composed of two separate chains alpha and beta, respectively a mRNA guanylyltransferase and an mRNA 5'-triphosphate monophosphatase.

Its subcellular location is the nucleus. It catalyses the reaction a 5'-end diphospho-ribonucleoside in mRNA + GTP + H(+) = a 5'-end (5'-triphosphoguanosine)-ribonucleoside in mRNA + diphosphate. Functionally, second step of mRNA capping. Transfer of the GMP moiety of GTP to the 5'-end of RNA via an enzyme-GMP covalent reaction intermediate. This chain is mRNA-capping enzyme subunit alpha (ceg1), found in Schizosaccharomyces pombe (strain 972 / ATCC 24843) (Fission yeast).